The following is a 53-amino-acid chain: MFDDLPTLTHAEQQVAVEKIQKLMAEGISTGEAIKIVAQQIREDKKAQNQGTH.

It belongs to the UPF0181 family.

In Vibrio cholerae serotype O1 (strain ATCC 39315 / El Tor Inaba N16961), this protein is UPF0181 protein VC_A0569.